Reading from the N-terminus, the 524-residue chain is MSWHPQYRSSKFRHVYGKPASKENCYDSVPITRSVHDNHFCAVNPHFIAVVTECAGGGAFLVIPLHQTGKLDPHYPKVCGHRGNVLDIKWNPFNDFEIASCSEDATIKIWNIPKQLLTRNLTTYRKELIGHARRVGLVEWHPTTANILFSAGYDYKVMVWNLDTKDSVIAGPVKTINCHQDVILSMSFNTNGSLLATTCKDRKIRIVDPRLGIVLQEASYKGHRANKVLFLGSLKKLLSTGTSRWNNRQMALWDQENLSVPLTEEDLDGSSGVLFPFFDSDTSMLYIVGKGDGNIRYYEVSMEKPHLTYLTEYRSYNPQKGIGIMPKRGLDVSSCEIFRFYKLITTKSLIEPVSMIVPRRSESYQEDIYPPTAAAQPSLTAHEWLSGMNRGPIMMSLRPGSELLDSQTLPPERPLSNSMVQVSPQPLEPMKQPAEDGDQAPFSLLEEKLAKWTAEHHLGEKSCLTNGFDVFECSPPKTENELLQMFYRQQEEIRRLRELLIQREVQTKQLELEIKNLRMALGQL.

WD repeat units lie at residues 80-120 (GHRG…LTRN), 130-170 (GHAR…SVIA), 178-217 (CHQD…VLQE), 220-263 (YKGH…VPLT), and 269-308 (GSSG…PHLT). The segment at 403 to 436 (LLDSQTLPPERPLSNSMVQVSPQPLEPMKQPAED) is disordered. The segment covering 404–424 (LDSQTLPPERPLSNSMVQVSP) has biased composition (polar residues). Residues 484–523 (QMFYRQQEEIRRLRELLIQREVQTKQLELEIKNLRMALGQ) adopt a coiled-coil conformation.

This sequence belongs to the WD repeat coronin family. Binds actin. Component of the N-Cor repressor complex, at least composed of NCOR1, NCOR2, HDAC3, TBL1X, TBL1R, CORO2A and GPS2.

This is Coronin-2A (Coro2a) from Mus musculus (Mouse).